The chain runs to 123 residues: Small ribosomal subunit protein uS12 (123 aa).

Position 89 is a 3-methylthioaspartic acid (Asp89). Positions 100–123 (GSLDTSGVKDRKQGRSKYGAKRPK) are disordered. Over residues 113–123 (GRSKYGAKRPK) the composition is skewed to basic residues.

The protein belongs to the universal ribosomal protein uS12 family. In terms of assembly, part of the 30S ribosomal subunit. Contacts proteins S8 and S17. May interact with IF1 in the 30S initiation complex.

Functionally, with S4 and S5 plays an important role in translational accuracy. In terms of biological role, interacts with and stabilizes bases of the 16S rRNA that are involved in tRNA selection in the A site and with the mRNA backbone. Located at the interface of the 30S and 50S subunits, it traverses the body of the 30S subunit contacting proteins on the other side and probably holding the rRNA structure together. The combined cluster of proteins S8, S12 and S17 appears to hold together the shoulder and platform of the 30S subunit. In Pseudomonas aeruginosa (strain LESB58), this protein is Small ribosomal subunit protein uS12.